The primary structure comprises 1079 residues: Error-prone DNA polymerase (1079 aa).

This sequence belongs to the DNA polymerase type-C family. DnaE2 subfamily.

Its subcellular location is the cytoplasm. The catalysed reaction is DNA(n) + a 2'-deoxyribonucleoside 5'-triphosphate = DNA(n+1) + diphosphate. Its function is as follows. DNA polymerase involved in damage-induced mutagenesis and translesion synthesis (TLS). It is not the major replicative DNA polymerase. This is Error-prone DNA polymerase from Ralstonia pickettii (strain 12J).